The following is a 327-amino-acid chain: MSVPGFWLEDGLPARALAPLAALYGAGVVLRRGLYQRGWLHRPASPVPVIVVGNLFVGGTGKTPLVAWLVTQLREYGWHPAIVARGYGGRAGKGPVAVTADSDPADSGDEPLLLARRCAVPVFVGSDRPATVQAAYQAGCDVVVSDDGLQHYRMRRDAEIVVLDAHRRLGNRRLLPAGPLREPIGRLAGVDIVAVNGDAVPEGDCVFHLQPGAPRAVDGSQRPWPGGEAHAVAGIGHPERFFASLQEVGIGVAERHVFPDHHAYSSQDLSFADERPIIMTEKDAVKCRDLPQADRLWYLPVELEPGCELTAAVSGLLTRLHAREGRV.

ATP is bound at residue 56-63; the sequence is FVGGTGKT.

Belongs to the LpxK family.

It catalyses the reaction a lipid A disaccharide + ATP = a lipid IVA + ADP + H(+). It participates in glycolipid biosynthesis; lipid IV(A) biosynthesis; lipid IV(A) from (3R)-3-hydroxytetradecanoyl-[acyl-carrier-protein] and UDP-N-acetyl-alpha-D-glucosamine: step 6/6. Transfers the gamma-phosphate of ATP to the 4'-position of a tetraacyldisaccharide 1-phosphate intermediate (termed DS-1-P) to form tetraacyldisaccharide 1,4'-bis-phosphate (lipid IVA). The polypeptide is Tetraacyldisaccharide 4'-kinase (Halorhodospira halophila (strain DSM 244 / SL1) (Ectothiorhodospira halophila (strain DSM 244 / SL1))).